The primary structure comprises 289 residues: UPF0173 metal-dependent hydrolase H16_A2129 (289 aa).

The protein belongs to the UPF0173 family.

The protein is UPF0173 metal-dependent hydrolase H16_A2129 of Cupriavidus necator (strain ATCC 17699 / DSM 428 / KCTC 22496 / NCIMB 10442 / H16 / Stanier 337) (Ralstonia eutropha).